The following is a 379-amino-acid chain: Spermatogenesis-associated protein 17 (379 aa).

3 IQ domains span residues 48-77 (ENDAAVMIQSWFRGCQVRAYMRHLNRVVTI), 71-100 (LNRVVTIIQKWWRSYLGRKFYQLVVEAAYY), and 107-136 (YNEMAVRIQRRWRGFRIRKYCFNYYYLKEY).

Strongly expressed in adult testis but weakly expressed in the spleen and thymus. Strongly expressed in round and elongating spermatids, and weakly or not expressed in spermatozoa.

It localises to the cytoplasm. The sequence is that of Spermatogenesis-associated protein 17 (Spata17) from Mus musculus (Mouse).